Here is a 31-residue protein sequence, read N- to C-terminus: Cytochrome b6-f complex subunit 6 (31 aa).

A helical membrane pass occupies residues 4–26 (LTSYFGFLLAALTITSALFIGLN).

This sequence belongs to the PetL family. As to quaternary structure, the 4 large subunits of the cytochrome b6-f complex are cytochrome b6, subunit IV (17 kDa polypeptide, PetD), cytochrome f and the Rieske protein, while the 4 small subunits are PetG, PetL, PetM and PetN. The complex functions as a dimer.

The protein localises to the plastid. Its subcellular location is the chloroplast thylakoid membrane. Functionally, component of the cytochrome b6-f complex, which mediates electron transfer between photosystem II (PSII) and photosystem I (PSI), cyclic electron flow around PSI, and state transitions. PetL is important for photoautotrophic growth as well as for electron transfer efficiency and stability of the cytochrome b6-f complex. The sequence is that of Cytochrome b6-f complex subunit 6 from Blitum bonus-henricus (Good King Henry).